The following is a 261-amino-acid chain: Acetylglutamate kinase (261 aa).

Residues 46 to 47, R68, and N160 contribute to the substrate site; that span reads GG.

This sequence belongs to the acetylglutamate kinase family. ArgB subfamily.

The protein resides in the cytoplasm. It catalyses the reaction N-acetyl-L-glutamate + ATP = N-acetyl-L-glutamyl 5-phosphate + ADP. It participates in amino-acid biosynthesis; L-arginine biosynthesis; N(2)-acetyl-L-ornithine from L-glutamate: step 2/4. Its function is as follows. Catalyzes the ATP-dependent phosphorylation of N-acetyl-L-glutamate. This chain is Acetylglutamate kinase, found in Shewanella loihica (strain ATCC BAA-1088 / PV-4).